The following is a 293-amino-acid chain: 4-hydroxy-tetrahydrodipicolinate synthase (293 aa).

A pyruvate-binding site is contributed by Thr47. Catalysis depends on Tyr136, which acts as the Proton donor/acceptor. Residue Lys164 is the Schiff-base intermediate with substrate of the active site. Ile206 serves as a coordination point for pyruvate.

Belongs to the DapA family. Homotetramer; dimer of dimers.

The protein localises to the cytoplasm. It catalyses the reaction L-aspartate 4-semialdehyde + pyruvate = (2S,4S)-4-hydroxy-2,3,4,5-tetrahydrodipicolinate + H2O + H(+). It functions in the pathway amino-acid biosynthesis; L-lysine biosynthesis via DAP pathway; (S)-tetrahydrodipicolinate from L-aspartate: step 3/4. Functionally, catalyzes the condensation of (S)-aspartate-beta-semialdehyde [(S)-ASA] and pyruvate to 4-hydroxy-tetrahydrodipicolinate (HTPA). This is 4-hydroxy-tetrahydrodipicolinate synthase from Listeria monocytogenes serotype 4b (strain CLIP80459).